The primary structure comprises 429 residues: Adenylosuccinate synthetase (429 aa).

Residues 12–18 and 40–42 contribute to the GTP site; these read GDEGKGK and GHT. The active-site Proton acceptor is the aspartate 13. Mg(2+) contacts are provided by aspartate 13 and glycine 40. IMP is bound by residues 13 to 16, 38 to 41, threonine 128, arginine 142, glutamine 223, threonine 238, and arginine 302; these read DEGK and NAGH. Histidine 41 functions as the Proton donor in the catalytic mechanism. Residue 298-304 coordinates substrate; the sequence is TTTGRPR. GTP contacts are provided by residues arginine 304, 330-332, and 412-414; these read SID and SVG.

Belongs to the adenylosuccinate synthetase family. As to quaternary structure, homodimer. Mg(2+) is required as a cofactor.

It localises to the cytoplasm. The enzyme catalyses IMP + L-aspartate + GTP = N(6)-(1,2-dicarboxyethyl)-AMP + GDP + phosphate + 2 H(+). Its pathway is purine metabolism; AMP biosynthesis via de novo pathway; AMP from IMP: step 1/2. In terms of biological role, plays an important role in the de novo pathway of purine nucleotide biosynthesis. Catalyzes the first committed step in the biosynthesis of AMP from IMP. The sequence is that of Adenylosuccinate synthetase from Lysinibacillus sphaericus (strain C3-41).